We begin with the raw amino-acid sequence, 540 residues long: Phosphatidylinositol 4-phosphate 5-kinase type-1 beta (540 aa).

The tract at residues 1–23 (MSSVTENGDVTAGKPNEEKTYKK) is disordered. The region spanning 25–395 (TSSAIKGAIQ…RFLKFMNTRV (371 aa)) is the PIPK domain.

The protein localises to the cytoplasm. The protein resides in the cytosol. It localises to the cell membrane. It is found in the endomembrane system. It carries out the reaction a 1,2-diacyl-sn-glycero-3-phospho-(1D-myo-inositol 4-phosphate) + ATP = a 1,2-diacyl-sn-glycero-3-phospho-(1D-myo-inositol-4,5-bisphosphate) + ADP + H(+). The catalysed reaction is 1-octadecanoyl-2-(5Z,8Z,11Z,14Z)-eicosatetraenoyl-sn-glycero-3-phospho-1D-myo-inositol 4-phosphate + ATP = 1-octadecanoyl-2-(5Z,8Z,11Z,14Z)-eicosatetraenoyl-sn-glycero-3-phospho-1D-myo-inositol 4,5-bisphosphate + ADP + H(+). The enzyme catalyses 1-octadecanoyl-2-(9Z)-octadecenoyl-sn-glycero-3-phospho-1D-myo-inositol 4-phosphate + ATP = 1-octadecanoyl-2-(9Z)-octadecenoyl-sn-glycero-3-phospho-1D-myo-inositol 4,5-bisphosphate + ADP + H(+). It catalyses the reaction 1-octadecanoyl-2-(9Z)-octadecenoyl-sn-glycero-3-phospho-1D-myo-inositol + ATP = 1-octadecanoyl-2-(9Z)-octadecenoyl-sn-glycero-3-phospho-1D-myo-inositol 5-phosphate + ADP + H(+). It carries out the reaction 1-octadecanoyl-2-(9Z,12Z)-octadecadienoyl-sn-glycero-3-phospho-1D-myo-inositol + ATP = 1-octadecanoyl-2-(9Z,12Z)-octadecadienoyl-sn-glycero-3-phospho-1D-myo-inositol 5-phosphate + ADP + H(+). The catalysed reaction is 1-octadecanoyl-2-(5Z,8Z,11Z,14Z-eicosatetraenoyl)-sn-glycero-3-phospho-(1D-myo-inositol) + ATP = 1-octadecanoyl-2-(5Z,8Z,11Z,14Z)-eicosatetraenoyl-sn-glycero-3-phospho-1D-myo-inositol 5-phosphate + ADP + H(+). The enzyme catalyses 1,2-di-(9Z,12Z)-octadecadienoyl-sn-glycero-3-phospho-1D-myo-inositol + ATP = 1,2-di(9Z,12Z)-octadecadienoyl-sn-glycero-3-phospho-1D-myo-inositol 5-phosphate + ADP + H(+). Catalyzes the phosphorylation of phosphatidylinositol 4-phosphate (PtdIns(4)P/PI4P) to form phosphatidylinositol 4,5-bisphosphate (PtdIns(4,5)P2/PIP2), a lipid second messenger that regulates several cellular processes such as signal transduction, vesicle trafficking, actin cytoskeleton dynamics, cell adhesion, and cell motility. PtdIns(4,5)P2 can directly act as a second messenger or can be utilized as a precursor to generate other second messengers: inositol 1,4,5-trisphosphate (IP3), diacylglycerol (DAG) or phosphatidylinositol-3,4,5-trisphosphate (PtdIns(3,4,5)P3/PIP3). This is Phosphatidylinositol 4-phosphate 5-kinase type-1 beta (PIP5K1B) from Gallus gallus (Chicken).